Consider the following 299-residue polypeptide: Putative pyrroline-5-carboxylate reductase 4 (299 aa).

It belongs to the pyrroline-5-carboxylate reductase family.

It catalyses the reaction L-proline + NADP(+) = (S)-1-pyrroline-5-carboxylate + NADPH + 2 H(+). It carries out the reaction L-proline + NAD(+) = (S)-1-pyrroline-5-carboxylate + NADH + 2 H(+). It participates in amino-acid biosynthesis; L-proline biosynthesis; L-proline from L-glutamate 5-semialdehyde: step 1/1. The polypeptide is Putative pyrroline-5-carboxylate reductase 4 (Caenorhabditis elegans).